An 85-amino-acid chain; its full sequence is Large ribosomal subunit protein bL27 (85 aa).

Residues 1 to 22 are disordered; that stretch reads MAHKKAGGSTNNGRDSESKRLG.

The protein belongs to the bacterial ribosomal protein bL27 family.

The protein is Large ribosomal subunit protein bL27 of Photobacterium profundum (strain SS9).